Consider the following 196-residue polypeptide: Probable GTP-binding protein EngB (196 aa).

The EngB-type G domain occupies 22–195 (KLPEVALAGR…WNWIESITKV (174 aa)). Residues 30-37 (GRSNVGKS), 57-61 (GKTQT), 75-78 (DVPG), 142-145 (TKID), and 174-176 (FSA) each bind GTP. Mg(2+) contacts are provided by Ser-37 and Thr-59.

This sequence belongs to the TRAFAC class TrmE-Era-EngA-EngB-Septin-like GTPase superfamily. EngB GTPase family. It depends on Mg(2+) as a cofactor.

Functionally, necessary for normal cell division and for the maintenance of normal septation. In Ligilactobacillus salivarius (strain UCC118) (Lactobacillus salivarius), this protein is Probable GTP-binding protein EngB.